Reading from the N-terminus, the 472-residue chain is Cell division protein FtsP (472 aa).

The tat-type signal signal peptide spans 1–32; it reads MSLSRRRFIQASGLALCAGGLPLQARASGAQA.

This sequence belongs to the FtsP family. In terms of processing, predicted to be exported by the Tat system. The position of the signal peptide cleavage has not been experimentally proven.

It localises to the periplasm. Its function is as follows. Cell division protein that is required for growth during stress conditions. May be involved in protecting or stabilizing the divisomal assembly under conditions of stress. The protein is Cell division protein FtsP of Edwardsiella tarda (strain FL6-60).